We begin with the raw amino-acid sequence, 293 residues long: Small ribosomal subunit biogenesis GTPase RsgA (293 aa).

The CP-type G domain occupies 63–223 (KNELVRPPIA…VADTPGFSSL (161 aa)). Residues 112-115 (SKMD) and 166-174 (GQSGVGKSS) each bind GTP. Zn(2+)-binding residues include cysteine 247, cysteine 252, histidine 254, and cysteine 260.

Belongs to the TRAFAC class YlqF/YawG GTPase family. RsgA subfamily. As to quaternary structure, monomer. Associates with 30S ribosomal subunit, binds 16S rRNA. The cofactor is Zn(2+).

It localises to the cytoplasm. In terms of biological role, one of several proteins that assist in the late maturation steps of the functional core of the 30S ribosomal subunit. Helps release RbfA from mature subunits. May play a role in the assembly of ribosomal proteins into the subunit. Circularly permuted GTPase that catalyzes slow GTP hydrolysis, GTPase activity is stimulated by the 30S ribosomal subunit. The polypeptide is Small ribosomal subunit biogenesis GTPase RsgA (Bacillus anthracis).